Here is a 739-residue protein sequence, read N- to C-terminus: Elongation factor 2 (739 aa).

A tr-type G domain is found at 19 to 261; that stretch reads RNIRNIGIIA…MVALHVPDPI (243 aa). Residues 28 to 35, 94 to 98, and 148 to 151 contribute to the GTP site; these read AHVDHGKT, DTPGH, and NKID. Histidine 603 is subject to Diphthamide.

The protein belongs to the TRAFAC class translation factor GTPase superfamily. Classic translation factor GTPase family. EF-G/EF-2 subfamily.

The protein resides in the cytoplasm. Functionally, catalyzes the GTP-dependent ribosomal translocation step during translation elongation. During this step, the ribosome changes from the pre-translocational (PRE) to the post-translocational (POST) state as the newly formed A-site-bound peptidyl-tRNA and P-site-bound deacylated tRNA move to the P and E sites, respectively. Catalyzes the coordinated movement of the two tRNA molecules, the mRNA and conformational changes in the ribosome. This chain is Elongation factor 2, found in Korarchaeum cryptofilum (strain OPF8).